A 433-amino-acid chain; its full sequence is 3-phosphoshikimate 1-carboxyvinyltransferase (433 aa).

The 3-phosphoshikimate site is built by K22, S23, and R27. Position 22 (K22) interacts with phosphoenolpyruvate. Phosphoenolpyruvate-binding residues include G95 and R123. The 3-phosphoshikimate site is built by S167, Q169, D315, and K342. A phosphoenolpyruvate-binding site is contributed by Q169. Catalysis depends on D315, which acts as the Proton acceptor. The phosphoenolpyruvate site is built by R346 and R387.

Belongs to the EPSP synthase family. In terms of assembly, monomer.

Its subcellular location is the cytoplasm. The catalysed reaction is 3-phosphoshikimate + phosphoenolpyruvate = 5-O-(1-carboxyvinyl)-3-phosphoshikimate + phosphate. It participates in metabolic intermediate biosynthesis; chorismate biosynthesis; chorismate from D-erythrose 4-phosphate and phosphoenolpyruvate: step 6/7. Its function is as follows. Catalyzes the transfer of the enolpyruvyl moiety of phosphoenolpyruvate (PEP) to the 5-hydroxyl of shikimate-3-phosphate (S3P) to produce enolpyruvyl shikimate-3-phosphate and inorganic phosphate. This chain is 3-phosphoshikimate 1-carboxyvinyltransferase, found in Legionella pneumophila (strain Corby).